We begin with the raw amino-acid sequence, 261 residues long: tRNA pseudouridine synthase A (261 aa).

Residue Asp-51 is the Nucleophile of the active site. A substrate-binding site is contributed by Tyr-109.

The protein belongs to the tRNA pseudouridine synthase TruA family. Homodimer.

The enzyme catalyses uridine(38/39/40) in tRNA = pseudouridine(38/39/40) in tRNA. Functionally, formation of pseudouridine at positions 38, 39 and 40 in the anticodon stem and loop of transfer RNAs. This Shewanella baltica (strain OS223) protein is tRNA pseudouridine synthase A.